The primary structure comprises 147 residues: Hemoglobin subunit beta (147 aa).

One can recognise a Globin domain in the interval 3 to 147; it reads EWTDDERAII…VVSALGRQYH (145 aa). Heme b is bound by residues His-64 and His-93.

The protein belongs to the globin family. As to quaternary structure, heterotetramer of two alpha chains and two beta chains. Red blood cells.

Its function is as follows. Involved in oxygen transport from gills to the various peripheral tissues. The sequence is that of Hemoglobin subunit beta (hbb) from Merlangius merlangus (Whiting).